The primary structure comprises 207 residues: Ribonuclease HII (207 aa).

Residues 17–207 form the RNase H type-2 domain; it reads RIVAGVDEVG…SFKPLAAFVD (191 aa). A divalent metal cation contacts are provided by Asp23, Glu24, and Asp120.

This sequence belongs to the RNase HII family. It depends on Mn(2+) as a cofactor. Requires Mg(2+) as cofactor.

The protein localises to the cytoplasm. The catalysed reaction is Endonucleolytic cleavage to 5'-phosphomonoester.. Endonuclease that specifically degrades the RNA of RNA-DNA hybrids. This Herpetosiphon aurantiacus (strain ATCC 23779 / DSM 785 / 114-95) protein is Ribonuclease HII.